We begin with the raw amino-acid sequence, 492 residues long: MDPPNSLQQGIRFGFHSSSFVENMEGSQDEDNLRLLASAASGSSRDTETPTDHASGSAGGAAGGQSESRPGPSGGGVADLFPELRRVLTRSTTSGQNRGIKRERNPSGNNSRTELALSLMSRRRPETVWWHEVQSEGRDEVSILQEKYSLEQLKTCWLEPEDDWEVAIRNYAKISLRPDKQYRITKKINIRNACYISGNGAEVIIDTQDKAAFRCCMMGMWPGVVGMEAITLMNIRFRGDGYNGIVFMANTKLILHGCSFFGFNNTCVEAWGQVSVRGCSFYACWIATSGRVKSQLSVKKCMFERCNLGILNEGEARVRHCAATETACFILIKGNASVKHNMICGHSDERPYQMLTCAGGHCNILATVHIVSHARKKWPVFEHNVITKCTMHIGGRRGMFMPYQCNMNHVKVMLEPDAFSRVSVTGIFDMNIQLWKILRYDDTKPRVRACECGGKHARFQPVCVDVTEDLRPDHLVLACTGAEFGSSGEETD.

Residues 22 to 112 (ENMEGSQDED…ERNPSGNNSR (91 aa)) are disordered. Residues 34–44 (RLLASAASGSS) show a composition bias toward low complexity. Serine 486 and serine 487 each carry phosphoserine. At threonine 491 the chain carries Phosphothreonine.

Belongs to the adenoviridae E1B 55 kDa protein family. In terms of assembly, interacts with host PML-4 and PML-5; this interaction promotes efficient subnuclear targeting of E1B-55K to PML nuclear bodies. Interacts with E4-ORF3 protein. Interacts with E4-ORF6 protein.

The protein resides in the host nucleus. The protein localises to the host cytoplasm. Its function is as follows. Plays a major role to prevent cellular inhibition of viral genome replication. Assembles an SCF-like E3 ubiquitin ligase complex based on the cellular proteins ELOB, ELOC, CUL5 and RBX1, in cooperation with viral E4orf6. This viral RING-type ligase ubiquitinates cellular substrates and targets them to proteasomal degradation: TP53/p53, LIG4, MRE11-RAD50-NBS1 (MRN) complex, ITGA3, DAXX and BLM. E1B-55K probably acts as the substrate-specific adapter of the SCF-like E3 ubiquitin ligase complex. Degradation of host TP53/p53 activity is essential for preventing E1A-induced TP53 accumulation that would otherwise lead to cell apoptosis and growth arrest. E1B-55K also inactivates TP53 transcription-factor activity by binding its transactivation domain. E1B-55K also functions as a SUMO1 E3 ligase for TP53 which causes the latter to be sequestered in promyelocytic leukemia (PML) nuclear bodies thereby contributing to maximal inhibition of TP53 function. The protein is E1B 55 kDa protein of Human adenovirus B serotype 7 (HAdV-7).